Reading from the N-terminus, the 178-residue chain is RNA pyrophosphohydrolase (178 aa).

The 154-residue stretch at 18-171 (PYRPCVGLMV…KRKVYEQVVA (154 aa)) folds into the Nudix hydrolase domain. Positions 59 to 80 (GGIDKGEDPAQAALRELYEETG) match the Nudix box motif.

Belongs to the Nudix hydrolase family. RppH subfamily. A divalent metal cation serves as cofactor.

Its function is as follows. Accelerates the degradation of transcripts by removing pyrophosphate from the 5'-end of triphosphorylated RNA, leading to a more labile monophosphorylated state that can stimulate subsequent ribonuclease cleavage. In Brucella canis (strain ATCC 23365 / NCTC 10854 / RM-666), this protein is RNA pyrophosphohydrolase.